A 457-amino-acid chain; its full sequence is Carboxypeptidase N catalytic chain (457 aa).

The signal sequence occupies residues Met1 to Phe23. A Peptidase M14 domain is found at Arg24–Val338. An intrachain disulfide couples Cys42 to Cys104. Residues His86, Glu89, and His216 each contribute to the Zn(2+) site. A disulfide bridge links Cys271 with Cys311. Glu308 serves as the catalytic Proton donor/acceptor. O-linked (GalNAc...) threonine glycans are attached at residues Thr400, Thr402, and Thr409. Positions Ser418 to Ala457 are disordered.

This sequence belongs to the peptidase M14 family. As to quaternary structure, tetramer of two catalytic chains and two glycosylated inactive chains. It depends on Zn(2+) as a cofactor. In terms of tissue distribution, plasma. Expressed in liver.

It is found in the secreted. The protein resides in the extracellular space. The catalysed reaction is Release of a C-terminal basic amino acid, preferentially lysine.. Its function is as follows. Protects the body from potent vasoactive and inflammatory peptides containing C-terminal Arg or Lys (such as kinins or anaphylatoxins) which are released into the circulation. The sequence is that of Carboxypeptidase N catalytic chain (Cpn1) from Rattus norvegicus (Rat).